A 448-amino-acid polypeptide reads, in one-letter code: Probable D-serine dehydratase (448 aa).

N6-(pyridoxal phosphate)lysine is present on Lys119.

The protein belongs to the serine/threonine dehydratase family. DsdA subfamily. Requires pyridoxal 5'-phosphate as cofactor.

The catalysed reaction is D-serine = pyruvate + NH4(+). The polypeptide is Probable D-serine dehydratase (Pseudomonas aeruginosa (strain UCBPP-PA14)).